We begin with the raw amino-acid sequence, 786 residues long: E3 ubiquitin-protein ligase pub3 (786 aa).

One can recognise a C2 domain in the interval Met1–Arg109. Disordered regions lie at residues Ile134–Ala225 and Thr263–Asn306. Residues Ser142–Gly193 show a composition bias toward low complexity. Over residues His204 to Gln213 the composition is skewed to polar residues. Residues Thr214–Ala225 are compositionally biased toward low complexity. The 34-residue stretch at Gly236–Ser269 folds into the WW 1 domain. Polar residues-rich tracts occupy residues Thr263 to Asn285 and Ser295 to Gly305. 2 WW domains span residues Asn306–Asn339 and Gly364–Leu397. An HECT domain is found at Ser453–Glu786. The active-site Glycyl thioester intermediate is Cys754.

The enzyme catalyses S-ubiquitinyl-[E2 ubiquitin-conjugating enzyme]-L-cysteine + [acceptor protein]-L-lysine = [E2 ubiquitin-conjugating enzyme]-L-cysteine + N(6)-ubiquitinyl-[acceptor protein]-L-lysine.. Its pathway is protein modification; protein ubiquitination. In terms of biological role, E3 ubiquitin-protein ligase which accepts ubiquitin from an E2 ubiquitin-conjugating enzyme in the form of a thioester and then directly transfers the ubiquitin to targeted substrates. In Schizosaccharomyces pombe (strain 972 / ATCC 24843) (Fission yeast), this protein is E3 ubiquitin-protein ligase pub3 (pub3).